Reading from the N-terminus, the 116-residue chain is Ribosome-binding factor A (116 aa).

This sequence belongs to the RbfA family. Monomer. Binds 30S ribosomal subunits, but not 50S ribosomal subunits or 70S ribosomes.

Its subcellular location is the cytoplasm. Functionally, one of several proteins that assist in the late maturation steps of the functional core of the 30S ribosomal subunit. Associates with free 30S ribosomal subunits (but not with 30S subunits that are part of 70S ribosomes or polysomes). Required for efficient processing of 16S rRNA. May interact with the 5'-terminal helix region of 16S rRNA. This chain is Ribosome-binding factor A, found in Buchnera aphidicola subsp. Cinara cedri (strain Cc).